We begin with the raw amino-acid sequence, 385 residues long: Serine/threonine-protein kinase 52 (385 aa).

A Protein kinase domain is found at 82 to 356 (LIIKTVLARG…PEMDEVVPML (275 aa)). ATP is bound by residues 88–96 (LARGTFGTV) and Lys-109. Asp-227 acts as the Proton acceptor in catalysis.

This sequence belongs to the protein kinase superfamily. Ser/Thr protein kinase family. Binds to CBC1. Associates with PHOT1, PHOT2, BLUS1 and PM H(+)-ATPase (e.g. AHA1). Post-translationally, autophosphorylated. Phosphorylated by HT1 in response to low CO(2) concentrations. In terms of tissue distribution, expressed in guard cells.

It localises to the cytoplasm. The protein resides in the cytosol. It carries out the reaction L-seryl-[protein] + ATP = O-phospho-L-seryl-[protein] + ADP + H(+). The catalysed reaction is L-threonyl-[protein] + ATP = O-phospho-L-threonyl-[protein] + ADP + H(+). Functionally, serine/threonine protein kinase that phosphorylates proteins on serine and threonine residues. Collectively with CBC1, acts as a negative regulator of stomatal opening, probably via the inhibition of plasma membrane-type ATPases (AHA1 and AHA2) activity in guard cells, but in an abscisic acid (ABA)-independent manner. However, at low concentrations of CO(2), together with CBC1, stimulates stomatal opening via the inhibition of S-type anion channels in response to blue light (BL) and red light (RL), thus being a key component to maximize photosynthesis in the light under low CO(2) conditions. Required for temperature decrease in leaves. Downstream target of HIGH LEAF TEMPERATURE1 (HT1) during low CO(2)-induced stomatal opening. This Arabidopsis thaliana (Mouse-ear cress) protein is Serine/threonine-protein kinase 52.